We begin with the raw amino-acid sequence, 229 residues long: Uracil-DNA glycosylase (229 aa).

Catalysis depends on Asp65, which acts as the Proton acceptor.

Belongs to the uracil-DNA glycosylase (UDG) superfamily. UNG family.

The protein localises to the cytoplasm. It carries out the reaction Hydrolyzes single-stranded DNA or mismatched double-stranded DNA and polynucleotides, releasing free uracil.. Its function is as follows. Excises uracil residues from the DNA which can arise as a result of misincorporation of dUMP residues by DNA polymerase or due to deamination of cytosine. The protein is Uracil-DNA glycosylase of Brevibacillus brevis (strain 47 / JCM 6285 / NBRC 100599).